The sequence spans 1470 residues: Roundabout homolog 2 (1470 aa).

Positions 1–21 (MNPLMFTLLLLFGFLCIQIDG) are cleaved as a signal peptide. Residues 22 to 863 (SRLRQEDFPP…EQITDVVKQP (842 aa)) lie on the Extracellular side of the membrane. Ig-like C2-type domains are found at residues 31-127 (PRIV…ASLE), 133-220 (DDFR…AELT), 225-309 (PTFL…ATLT), 318-413 (PQFV…LEVT), and 422-508 (PIIL…AVLD). Cysteine 52 and cysteine 110 are joined by a disulfide. N-linked (GlcNAc...) asparagine glycosylation is present at asparagine 123. 3 disulfide bridges follow: cysteine 154–cysteine 203, cysteine 246–cysteine 293, and cysteine 339–cysteine 395. Asparagine 430 is a glycosylation site (N-linked (GlcNAc...) asparagine). A disulfide bridge links cysteine 443 with cysteine 492. 3 consecutive Fibronectin type-III domains span residues 528–622 (PPSK…TQDI), 641–739 (VVVR…TEEA), and 743–840 (PPQS…IGGR). N-linked (GlcNAc...) asparagine glycans are attached at residues asparagine 756, asparagine 786, asparagine 793, and asparagine 849. Residues 864-884 (AFIAGIGGACWVILMGFSIWL) traverse the membrane as a helical segment. The Cytoplasmic segment spans residues 885–1470 (YWRRKKRKGL…GSNSQGQFTE (586 aa)). Disordered stretches follow at residues 1036–1089 (GFGY…LPGT), 1129–1159 (EDRV…LTPS), 1190–1371 (IQSN…DCPA), and 1383–1470 (DWIN…QFTE). A compositionally biased stretch (polar residues) spans 1144 to 1158 (PAISFGQQSTATLTP). Residue threonine 1157 is modified to Phosphothreonine. A Phosphoserine modification is found at serine 1159. Over residues 1194 to 1203 (TPPPQPPAPP) the composition is skewed to pro residues. Acidic residues predominate over residues 1215–1231 (LETDVPDEDADDEEEPL). Over residues 1243–1288 (TPGSSMDNLDSSVTGKAFSSSQRQRPTSPFSTDSNTSAAQNQSQRP) the composition is skewed to polar residues. Over residues 1315–1325 (DLPPPPDPPPG) the composition is skewed to pro residues. Residues 1328-1343 (LRQQIGLSQHSGNVEN) are compositionally biased toward polar residues. A compositionally biased stretch (low complexity) spans 1413–1437 (SKPSFPSPGGHSSSGTSSSKGSTGP). Residues 1461–1470 (GSNSQGQFTE) are compositionally biased toward polar residues.

This sequence belongs to the immunoglobulin superfamily. ROBO family. Interacts with SLIT2. As to expression, expressed in embryonal spinal cord.

Its subcellular location is the membrane. Functionally, receptor for SLIT2, and probably SLIT1, which are thought to act as molecular guidance cue in cellular migration, including axonal navigation at the ventral midline of the neural tube and projection of axons to different regions during neuronal development. The protein is Roundabout homolog 2 (Robo2) of Mus musculus (Mouse).